A 389-amino-acid polypeptide reads, in one-letter code: Succinate--CoA ligase [ADP-forming] subunit beta (389 aa).

Residues 9–244 form the ATP-grasp domain; sequence KEILRKFGVA…LDEEDPAEVE (236 aa). ATP-binding positions include Lys46, 53–55, Glu99, Ala102, and Glu107; that span reads GRG. 2 residues coordinate Mg(2+): Asn199 and Asp213. Residues Asn264 and 321 to 323 contribute to the substrate site; that span reads GIM.

It belongs to the succinate/malate CoA ligase beta subunit family. Heterotetramer of two alpha and two beta subunits. Requires Mg(2+) as cofactor.

It catalyses the reaction succinate + ATP + CoA = succinyl-CoA + ADP + phosphate. The catalysed reaction is GTP + succinate + CoA = succinyl-CoA + GDP + phosphate. It participates in carbohydrate metabolism; tricarboxylic acid cycle; succinate from succinyl-CoA (ligase route): step 1/1. Succinyl-CoA synthetase functions in the citric acid cycle (TCA), coupling the hydrolysis of succinyl-CoA to the synthesis of either ATP or GTP and thus represents the only step of substrate-level phosphorylation in the TCA. The beta subunit provides nucleotide specificity of the enzyme and binds the substrate succinate, while the binding sites for coenzyme A and phosphate are found in the alpha subunit. In Paraburkholderia phytofirmans (strain DSM 17436 / LMG 22146 / PsJN) (Burkholderia phytofirmans), this protein is Succinate--CoA ligase [ADP-forming] subunit beta.